Reading from the N-terminus, the 504-residue chain is MFS antiporter QDR2 (504 aa).

A compositionally biased stretch (polar residues) spans 1-14 (MLSTTQSVTEPTEV). The interval 1–23 (MLSTTQSVTEPTEVTSKKVEDIE) is disordered. Over 1-41 (MLSTTQSVTEPTEVTSKKVEDIEKENDEETPYSIFTSYDRL) the chain is Cytoplasmic. The helical transmembrane segment at 42-62 (VLIVILSLIGFWSTISSPIYF) threads the bilayer. Topologically, residues 63–75 (PALPTLTSYFHTS) are extracellular. The helical transmembrane segment at 76–96 (SSIMNISVVAYLIFQGIAPTI) threads the bilayer. Residues 97–106 (SSNLADTFGR) are Cytoplasmic-facing. Residues 107 to 129 (RPVILASIIVFCASCVAISQTNV) traverse the membrane as a helical segment. At 130 to 132 (YWL) the chain is on the extracellular side. A helical membrane pass occupies residues 133-155 (LAVLRCIQAAGIAAVISISSGVA). The Cytoplasmic segment spans residues 156-169 (GDVCTRANRGSMVG). A helical transmembrane segment spans residues 170–190 (AVAGLQLVGNGIGGLVGAALI). Residues 191–198 (SSFNSWRS) lie on the Extracellular side of the membrane. A helical membrane pass occupies residues 199 to 219 (IFIFLTIGGGVTFILAIFILP). Over 220-278 (ETSRKLVGNGSVVPKNILNKSPYIYLPHFKKRMNNDITTIVPATRFDLLGPLKIFFQKN) the chain is Cytoplasmic. A helical transmembrane segment spans residues 279-299 (VFCTLLPVGIHFAAWTMVLTS). The Extracellular segment spans residues 300 to 311 (LSTELESRYHYS). The helical transmembrane segment at 312–332 (VMHVGLIYLPQGIACIAGSLV) threads the bilayer. Residues 333 to 370 (VGKSLDWYYRYRKTIYDQEVECLPLDERPQFNIVATRL) are Cytoplasmic-facing. Residues 371–391 (TLSVVPALLMIIGLVIFGWCI) form a helical membrane-spanning segment. Topologically, residues 392 to 396 (QYKRH) are extracellular. The helical transmembrane segment at 397-417 (IISIIISTILVSFSASVFIAI) threads the bilayer. The Cytoplasmic portion of the chain corresponds to 418-438 (CTTMLVDLYPNNGSGSTSCLN). Residues 439–456 (LMRCWLAALGAGVLDSMI) form a helical membrane-spanning segment. Over 457 to 460 (NAMN) the chain is Extracellular. The helical transmembrane segment at 461–483 (VGGTYTVVAGFCILFDLALIYVL) threads the bilayer. At 484 to 504 (HNAKKKFSNSGPTTTKSPPKQ) the chain is on the cytoplasmic side.

It belongs to the major facilitator superfamily. CAR1 family.

Its subcellular location is the cell membrane. Functionally, MFS antiporter that does not display functional linkage as drug transporter and performs functions that significantly affect biofilm development and virulence. No substrate for transport has been identified yet, but plays an important role in the growth in the host. The sequence is that of MFS antiporter QDR2 (QDR2) from Candida albicans (strain SC5314 / ATCC MYA-2876) (Yeast).